We begin with the raw amino-acid sequence, 443 residues long: Xaa-Pro dipeptidase (443 aa).

The Mn(2+) site is built by Asp246, Asp257, His339, Glu384, and Glu423.

Belongs to the peptidase M24B family. Bacterial-type prolidase subfamily. Requires Mn(2+) as cofactor.

It catalyses the reaction Xaa-L-Pro dipeptide + H2O = an L-alpha-amino acid + L-proline. Functionally, splits dipeptides with a prolyl residue in the C-terminal position. The sequence is that of Xaa-Pro dipeptidase from Escherichia coli O81 (strain ED1a).